The sequence spans 286 residues: Protein N-terminal amidase (286 aa).

Positions 1 to 286 constitute a CN hydrolase domain; that stretch reads MKFGCVQFFP…NGIVVGELEK (286 aa). The active-site Proton acceptor is the E43. K121 functions as the Proton donor in the catalytic mechanism. C155 acts as the Nucleophile in catalysis.

This sequence belongs to the carbon-nitrogen hydrolase superfamily.

It is found in the cytoplasm. The protein localises to the nucleus. Deamidates N-terminal Asn and Gln. Component of a targeting complex in the N-end rule pathway. This chain is Protein N-terminal amidase (nta1), found in Schizosaccharomyces pombe (strain 972 / ATCC 24843) (Fission yeast).